The sequence spans 576 residues: Peroxisomal targeting signal receptor (576 aa).

Cysteine 10 is covalently cross-linked (Glycyl cysteine thioester (Cys-Gly) (interchain with G-Cter in ubiquitin)). The amphipathic helix 1 (AH1) stretch occupies residues 11–33 (AAGSNPLAQFTKHTQHDTSLQQS). A Glycyl lysine isopeptide (Lys-Gly) (interchain with G-Cter in ubiquitin) cross-link involves residue lysine 22. The segment at 58–75 (RQQMDQFMQQQNNPAFNF) is amphipathic helix 2 (AH2). Short sequence motifs (wxxxF/Y motif) lie at residues 100 to 104 (WNQEF) and 128 to 132 (WAQDF). A disordered region spans residues 176-195 (AQMQQQNPAQAQTSEQSQTQ). The short motif at 196–200 (WEDQF) is the WxxxF/Y motif 3 element. Residues 224–240 (FEQVWDDIQVSYADVEL) are amphipathic helix 4 (AH4). A WxxxF/Y motif 4 motif is present at residues 249 to 253 (WEKDF). TPR repeat units follow at residues 278 to 311 (PDAY…DPKH), 312 to 345 (VDAW…DPTN), 346 to 383 (LAAL…IASR), 384 to 421 (ARSS…ASMD), 422 to 455 (ADVQ…EPDK), 456 to 489 (ALNW…NPNF), and 490 to 523 (VRAR…HEVE).

The protein belongs to the peroxisomal targeting signal receptor family. As to quaternary structure, interacts (via WxxxF/Y and LVxEF motifs) with PEX14; promoting translocation through the PEX13-PEX14 docking complex. Interacts with PEX8. In terms of processing, a disulfide bond is created between Cys-10 and Cys-338 or Cys-444. Post-translationally, monoubiquitinated at Cys-10 by PEX2 during PEX5 passage through the retrotranslocation channel: monoubiquitination acts as a signal for PEX5 extraction and is required for proper export from peroxisomes and recycling. When PEX5 recycling is compromised, polyubiquitinated at Lys-22 by PEX10 during its passage through the retrotranslocation channel, leading to its degradation.

The protein resides in the peroxisome membrane. The protein localises to the cytoplasm. It localises to the cytosol. Its subcellular location is the peroxisome matrix. Receptor that mediates peroxisomal import of proteins containing a C-terminal PTS1-type tripeptide peroxisomal targeting signal (SKL-type). Binds to cargo proteins containing a PTS1 peroxisomal targeting signal in the cytosol, and translocates them into the peroxisome matrix by passing through the peroxisomal docking complex along with cargo proteins. PEX5 receptor is then retrotranslocated into the cytosol, leading to release of bound cargo in the peroxisome matrix, and reset for a subsequent peroxisome import cycle. Required for PEX7 ubiquitination. The sequence is that of Peroxisomal targeting signal receptor from Komagataella phaffii (strain GS115 / ATCC 20864) (Yeast).